The sequence spans 534 residues: Origin of replication complex subunit 5 (534 aa).

The disordered stretch occupies residues 1-36; that stretch reads MPPKEESSKVTRRSTRSSASVTVENSEPIESHTPTI. ATP is bound at residue 83-90; it reads GGASTGKT. The Nuclear localization signal motif lies at 129–136; sequence HRKCSLNG. Positions 397-428 are disordered; it reads MFDSTGGMDNRKRKRKASEKSMEKKEIAEQEA. Over residues 414–424 the composition is skewed to basic and acidic residues; sequence SEKSMEKKEIA.

This sequence belongs to the ORC5 family. In terms of assembly, component of the origin recognition complex (ORC) composed of at least ORC1 (ORC1A or ORC1B), ORC2, ORC3, ORC4, ORC5 and ORC6. ORC is regulated in a cell-cycle and development dependent manner. It is sequentially assembled at the exit from anaphase of mitosis and disassembled as cells enter S phase. Interacts directly with ORC1A, ORC1B, ORC2, ORC3, ORC4 and ORC6. Follow a cell-cycle regulation with a peak at the G1/S-phase. Mostly expressed in flower buds and cauline leaves, and, to a lower exent, in roots, leaves and stems. Expressed at low levels ubiquitously.

It localises to the nucleus. Its function is as follows. Component of the origin recognition complex (ORC) that binds origins of replication. DNA-binding is ATP-dependent. The specific DNA sequences that define origins of replication have not been identified yet. ORC is required to assemble the pre-replication complex necessary to initiate DNA replication. In Arabidopsis thaliana (Mouse-ear cress), this protein is Origin of replication complex subunit 5.